We begin with the raw amino-acid sequence, 235 residues long: Succinate dehydrogenase iron-sulfur subunit (235 aa).

Residues C53, C58, and C73 each contribute to the [2Fe-2S] cluster site. The 4Fe-4S ferredoxin-type domain maps to E133–F163. [4Fe-4S] cluster contacts are provided by C143, C146, and C149. C153 lines the [3Fe-4S] cluster pocket. W158 serves as a coordination point for a ubiquinone. [3Fe-4S] cluster-binding residues include C200 and C206. C210 lines the [4Fe-4S] cluster pocket.

Belongs to the succinate dehydrogenase/fumarate reductase iron-sulfur protein family. In terms of assembly, part of an enzyme complex containing four subunits: a flavoprotein, an iron-sulfur protein, cytochrome b-556 and a hydrophobic protein. The cofactor is [2Fe-2S] cluster. [3Fe-4S] cluster is required as a cofactor. It depends on [4Fe-4S] cluster as a cofactor.

It carries out the reaction a quinone + succinate = fumarate + a quinol. The protein operates within carbohydrate metabolism; tricarboxylic acid cycle; fumarate from succinate (bacterial route): step 1/1. In Coxiella burnetii (strain RSA 493 / Nine Mile phase I), this protein is Succinate dehydrogenase iron-sulfur subunit (sdhB).